The primary structure comprises 261 residues: Small ribosomal subunit protein eS1A (261 aa).

Residues 1–18 (MTLGKNKRISKGGKRGKK) are compositionally biased toward basic residues. A disordered region spans residues 1 to 23 (MTLGKNKRISKGGKRGKKKTQET).

The protein belongs to the eukaryotic ribosomal protein eS1 family. In terms of assembly, component of the small ribosomal subunit. Mature ribosomes consist of a small (40S) and a large (60S) subunit. The 40S subunit contains about 33 different proteins and 1 molecule of RNA (18S). The 60S subunit contains about 49 different proteins and 3 molecules of RNA (25S, 5.8S and 5S).

The protein resides in the cytoplasm. This is Small ribosomal subunit protein eS1A from Trypanosoma cruzi (strain CL Brener).